Consider the following 478-residue polypeptide: Ubiquitin carboxyl-terminal hydrolase calypso (478 aa).

The UCH catalytic domain maps to 11 to 239 (GWLELESDPG…IRFNLMAVVP (229 aa)). The active-site Nucleophile is C97. Residue H176 is the Proton donor of the active site. Residues 400 to 428 (NYDEFICTFLSMLAHQGELGDLVSQHLIT) form the ULD domain. The interval 430 to 478 (RKPNMGSVQNSGSRGVVRNYNKKTTTNGSSPKTPSSKRRRGRTKYRKRK) is positively charged C-terminal tail required for binding nucleosomes. The span at 432-442 (PNMGSVQNSGS) shows a compositional bias: polar residues. The interval 432 to 478 (PNMGSVQNSGSRGVVRNYNKKTTTNGSSPKTPSSKRRRGRTKYRKRK) is disordered. A compositionally biased stretch (basic residues) spans 464–478 (SSKRRRGRTKYRKRK).

The protein belongs to the peptidase C12 family. BAP1 subfamily. In terms of assembly, catalytic component of the polycomb repressive deubiquitinase (PR-DUB) complex, at least composed of caly/calypso, Asx and sba (MBD5/6 homolog). The PR-DUB complex associates with nucleosomes to mediate deubiquitination of histone H2AK118ub1 substrates; the association requires the positively charged C-terminal tail of caly, probably due to direct binding of DNA. Interacts (via ULD domain) with Asx (via DEUBAD domain); the interaction produces a stable heterodimer with a composite binding site for ubiquitin. Homodimerizes (via coiled-coil hinge-region between the UCH and ULD domains) to mediate assembly of 2 copies of the caly-Asx heterodimer into a bisymmetric tetramer; dimerization enhances PR-DUB association with nucleosomes.

It is found in the nucleus. It catalyses the reaction Thiol-dependent hydrolysis of ester, thioester, amide, peptide and isopeptide bonds formed by the C-terminal Gly of ubiquitin (a 76-residue protein attached to proteins as an intracellular targeting signal).. Its function is as follows. Catalytic component of the polycomb repressive deubiquitinase (PR-DUB) complex, a complex that specifically mediates deubiquitination of histone H2A monoubiquitinated at 'Lys-119' (H2AK118ub1). Mediates bisymmetric organization of the PR-DUB complex and is involved in association with nucleosomes to mediate deubiquitination. Does not deubiquitinate monoubiquitinated histone H2B. Required to maintain the transcriptionally repressive state of homeotic genes throughout development. The PR-DUB complex has weak or no activity toward 'Lys-48'- and 'Lys-63'-linked polyubiquitin chains. Polycomb group (PcG) protein. This Aedes aegypti (Yellowfever mosquito) protein is Ubiquitin carboxyl-terminal hydrolase calypso.